Consider the following 240-residue polypeptide: MKPAYFISDLHLSEKHPELTALLLRFLRSSAAGQARAIYILGDLFDFWVGDDEVSELNTSVAREIRKLSDKGVAVFFVRGNRDFLIGQDFCRQAGMTLLPDYSVLDLFGCKTLICHGDTLCTDDRAYQRFRKIVHRKRLQKLFLMLPLKWRTRLAAKIRRVSKMEKQVKPADIMDVNAAFTARQVRAFNAERLIHGHTHREHIHHENGFTRIVLGDWHNDYASILRVDGDGAVFVPLEKY.

Positions 9, 11, 43, 81, and 116 each coordinate Mn(2+). 81-82 (NR) is a binding site for substrate. 5 residues coordinate substrate: D124, S162, K166, K169, and H197. Mn(2+)-binding residues include H197 and H199.

It belongs to the LpxH family. The cofactor is Mn(2+).

It localises to the cell inner membrane. It catalyses the reaction UDP-2-N,3-O-bis[(3R)-3-hydroxytetradecanoyl]-alpha-D-glucosamine + H2O = 2-N,3-O-bis[(3R)-3-hydroxytetradecanoyl]-alpha-D-glucosaminyl 1-phosphate + UMP + 2 H(+). It participates in glycolipid biosynthesis; lipid IV(A) biosynthesis; lipid IV(A) from (3R)-3-hydroxytetradecanoyl-[acyl-carrier-protein] and UDP-N-acetyl-alpha-D-glucosamine: step 4/6. In terms of biological role, hydrolyzes the pyrophosphate bond of UDP-2,3-diacylglucosamine to yield 2,3-diacylglucosamine 1-phosphate (lipid X) and UMP by catalyzing the attack of water at the alpha-P atom. Involved in the biosynthesis of lipid A, a phosphorylated glycolipid that anchors the lipopolysaccharide to the outer membrane of the cell. The polypeptide is UDP-2,3-diacylglucosamine hydrolase (Neisseria meningitidis serogroup A / serotype 4A (strain DSM 15465 / Z2491)).